Consider the following 540-residue polypeptide: BTB/POZ domain-containing protein 6-A (540 aa).

The 71-residue stretch at 138-208 (ADVHFIVGPP…MYSDEIELAP (71 aa)) folds into the BTB domain.

Interacts with cul3. Interacts (via BTB domain) with zbtb16/plzf. In terms of tissue distribution, expressed in the developing central nervous system.

Its subcellular location is the cytoplasm. The protein resides in the nucleus. Functionally, adapter protein for the cul3 E3 ubiquitin-protein ligase complex. Promotes the export of zbtb16/plzf from the nucleus to the cytoplasm and targets zbtb16/plzf for ubiquitination and degradation. Up-regulates neurog1 expression and antagonizes zbtb16/plzf, to promote neurogenesis. This chain is BTB/POZ domain-containing protein 6-A (btbd6a), found in Danio rerio (Zebrafish).